The chain runs to 481 residues: Probable autolysin LytO (481 aa).

Residues 7–148 form the Peptidase C51 domain; the sequence is KNEFIEWLKT…AYDFPMWFIR (142 aa). The span at 155–165 shows a compositional bias: polar residues; sequence TAPRSVQSPTQ. Residues 155 to 177 form a disordered region; that stretch reads TAPRSVQSPTQAPKKETAKPQPK. Residues 198–323 enclose the N-acetylmuramoyl-L-alanine amidase domain; it reads SNPKGIVIHN…NEFTSTSCPH (126 aa). Residues 398-466 form the SH3b domain; the sequence is EESARFTNGN…YLPIRTWNGS (69 aa).

Belongs to the N-acetylmuramoyl-L-alanine amidase 2 family.

It catalyses the reaction Hydrolyzes the link between N-acetylmuramoyl residues and L-amino acid residues in certain cell-wall glycopeptides.. Its function is as follows. Has weak lytic activity toward S.aureus cells. The polypeptide is Probable autolysin LytO (Staphylococcus aureus (strain NCTC 8325 / PS 47)).